The sequence spans 143 residues: Pathogenesis-related protein P2 (143 aa).

The N-terminal stretch at 1 to 23 (MERVNKLCVAFFVINMMMAVAAA) is a signal peptide. The 120-residue stretch at 24 to 143 (QSATNVRATY…LNVNYEFVNC (120 aa)) folds into the Barwin domain. Intrachain disulfides connect Cys-52-Cys-84, Cys-73-Cys-107, and Cys-87-Cys-143.

It is found in the secreted. Its subcellular location is the cell wall. The chain is Pathogenesis-related protein P2 from Solanum lycopersicum (Tomato).